Reading from the N-terminus, the 246-residue chain is Aliphatic sulfonates import ATP-binding protein SsuB 2 (246 aa).

An ABC transporter domain is found at 4 to 218 (VTVRGLRRAF…RRDPRFEQAR (215 aa)). ATP is bound at residue 36–43 (GRSGGGKT).

This sequence belongs to the ABC transporter superfamily. Aliphatic sulfonates importer (TC 3.A.1.17.2) family. As to quaternary structure, the complex is composed of two ATP-binding proteins (SsuB), two transmembrane proteins (SsuC) and a solute-binding protein (SsuA).

The protein localises to the cell membrane. The enzyme catalyses ATP + H2O + aliphatic sulfonate-[sulfonate-binding protein]Side 1 = ADP + phosphate + aliphatic sulfonateSide 2 + [sulfonate-binding protein]Side 1.. Part of the ABC transporter complex SsuABC involved in aliphatic sulfonates import. Responsible for energy coupling to the transport system. This Frankia alni (strain DSM 45986 / CECT 9034 / ACN14a) protein is Aliphatic sulfonates import ATP-binding protein SsuB 2.